Reading from the N-terminus, the 53-residue chain is Large ribosomal subunit protein bL32c (53 aa).

The protein belongs to the bacterial ribosomal protein bL32 family.

Its subcellular location is the plastid. The protein resides in the chloroplast. This Guillardia theta (Cryptophyte) protein is Large ribosomal subunit protein bL32c (rpl32).